The chain runs to 170 residues: Lipoprotein signal peptidase (170 aa).

Helical transmembrane passes span 12–32, 67–87, and 94–116; these read WYWV…WVLS, WQRW…SVWL, and MWRL…IDRL. Active-site residues include Asp123 and Asp141. A helical transmembrane segment spans residues 133-153; it reads HFPAFNIADSAICVGAALIIL.

The protein belongs to the peptidase A8 family.

It localises to the cell inner membrane. It catalyses the reaction Release of signal peptides from bacterial membrane prolipoproteins. Hydrolyzes -Xaa-Yaa-Zaa-|-(S,diacylglyceryl)Cys-, in which Xaa is hydrophobic (preferably Leu), and Yaa (Ala or Ser) and Zaa (Gly or Ala) have small, neutral side chains.. It functions in the pathway protein modification; lipoprotein biosynthesis (signal peptide cleavage). In terms of biological role, this protein specifically catalyzes the removal of signal peptides from prolipoproteins. The polypeptide is Lipoprotein signal peptidase (Shewanella halifaxensis (strain HAW-EB4)).